Consider the following 377-residue polypeptide: Leukocyte elastase inhibitor (377 aa).

M1 carries the post-translational modification N-acetylmethionine.

The protein belongs to the serpin family. Ov-serpin subfamily.

The protein resides in the cytoplasm. In terms of biological role, regulates the activity of the neutrophil proteases. The chain is Leukocyte elastase inhibitor (serpinb1) from Xenopus tropicalis (Western clawed frog).